A 1388-amino-acid chain; its full sequence is ESX-5 secretion system protein EccC5 (1388 aa).

Helical transmembrane passes span 38–58 and 65–85; these read WLIVVGVVVVGLLGGMVAMVF and FGGVGSIFPIFMMVGIMMMMF. FtsK domains follow at residues 477-679, 855-1049, and 1158-1351; these read GELL…GAAQ, QPPW…EDAK, and LQPV…DPDE. ATP-binding positions include 500–507, 873–880, and 1175–1182; these read GTTGSGKS, GAGGSGKT, and GRRECGRT.

Part of the ESX-5 / type VII secretion system (T7SS), which is composed of cytosolic and membrane components. The ESX-5 membrane complex is composed of EccB5, EccC5, EccD5 and EccE5.

It is found in the cell inner membrane. Part of the ESX-5 specialized secretion system, which is responsible for the secretion of EsxN and a number of PE_PGRS and PPE proteins. This component is essential for ESX-5 complex stability and secretion. The chain is ESX-5 secretion system protein EccC5 from Mycobacterium marinum (strain ATCC BAA-535 / M).